A 220-amino-acid chain; its full sequence is Protein-L-isoaspartate O-methyltransferase (220 aa).

Residue Ser65 is part of the active site.

Belongs to the methyltransferase superfamily. L-isoaspartyl/D-aspartyl protein methyltransferase family.

It is found in the cytoplasm. The enzyme catalyses [protein]-L-isoaspartate + S-adenosyl-L-methionine = [protein]-L-isoaspartate alpha-methyl ester + S-adenosyl-L-homocysteine. Its function is as follows. Catalyzes the methyl esterification of L-isoaspartyl residues in peptides and proteins that result from spontaneous decomposition of normal L-aspartyl and L-asparaginyl residues. It plays a role in the repair and/or degradation of damaged proteins. This is Protein-L-isoaspartate O-methyltransferase from Pelodictyon phaeoclathratiforme (strain DSM 5477 / BU-1).